We begin with the raw amino-acid sequence, 220 residues long: Ribosomal RNA large subunit methyltransferase E (220 aa).

5 residues coordinate S-adenosyl-L-methionine: G60, W62, D92, D108, and D133. K173 serves as the catalytic Proton acceptor.

It belongs to the class I-like SAM-binding methyltransferase superfamily. RNA methyltransferase RlmE family.

It is found in the cytoplasm. The catalysed reaction is uridine(2552) in 23S rRNA + S-adenosyl-L-methionine = 2'-O-methyluridine(2552) in 23S rRNA + S-adenosyl-L-homocysteine + H(+). In terms of biological role, specifically methylates the uridine in position 2552 of 23S rRNA at the 2'-O position of the ribose in the fully assembled 50S ribosomal subunit. The protein is Ribosomal RNA large subunit methyltransferase E of Burkholderia thailandensis (strain ATCC 700388 / DSM 13276 / CCUG 48851 / CIP 106301 / E264).